The following is a 263-amino-acid chain: Tropinone reductase homolog At2g29300 (263 aa).

NADP(+) is bound at residue 13-37 (LVTGAASGIGYAIVEELAGFGARIH). Residue S146 participates in substrate binding. Residue Y160 is the Proton acceptor of the active site.

This sequence belongs to the short-chain dehydrogenases/reductases (SDR) family. SDR65C subfamily.

This Arabidopsis thaliana (Mouse-ear cress) protein is Tropinone reductase homolog At2g29300.